The chain runs to 346 residues: Annexin A1 (346 aa).

At alanine 2 the chain carries N-acetylalanine. The residue at position 5 (serine 5) is a Phosphoserine; by TRPM7. Glutamine 19 is covalently cross-linked (Isoglutamyl lysine isopeptide (Gln-Lys) (interchain with K-?)). Position 21 is a phosphotyrosine; by EGFR (tyrosine 21). Serine 27 is subject to Phosphoserine; by PKC. Phosphoserine is present on residues serine 34 and serine 37. Threonine 41 is subject to Phosphothreonine. Annexin repeat units lie at residues 42 to 113 (FNPS…ALLK), 114 to 185 (TPAQ…SLAK), 197 to 269 (DLAD…AIVK), and 273 to 344 (SKPA…ALCG). Lysine 58 is modified (N6-acetyllysine). 11 residues coordinate Ca(2+): glycine 59, valine 60, glutamate 62, lysine 97, leucine 100, glutamate 105, methionine 127, glycine 129, glycine 131, threonine 132, and glutamate 134. At threonine 136 the chain carries Phosphothreonine. Ca(2+) contacts are provided by aspartate 171, glycine 210, and arginine 213. Lysine 214 is covalently cross-linked (Glycyl lysine isopeptide (Lys-Gly) (interchain with G-Cter in SUMO1); alternate). Lysine 214 is covalently cross-linked (Glycyl lysine isopeptide (Lys-Gly) (interchain with G-Cter in SUMO2); alternate). Ca(2+) is bound at residue glycine 215. The residue at position 239 (lysine 239) is an N6-acetyllysine. Residues aspartate 253, glutamate 255, and leucine 256 each coordinate Ca(2+). Residue lysine 257 forms a Glycyl lysine isopeptide (Lys-Gly) (interchain with G-Cter in SUMO1) linkage. Glutamate 261, methionine 286, glycine 288, and glycine 290 together coordinate Ca(2+). The residue at position 312 (lysine 312) is an N6-acetyllysine. Cysteine 324 and cysteine 343 are joined by a disulfide. Residues leucine 328, glutamate 330, and threonine 331 each coordinate Ca(2+). Lysine 332 participates in a covalent cross-link: Glycyl lysine isopeptide (Lys-Gly) (interchain with G-Cter in SUMO1). Glutamate 336 is a binding site for Ca(2+).

This sequence belongs to the annexin family. As to quaternary structure, homodimer; non-covalently linked. Homodimer; linked by transglutamylation. Homodimers linked by transglutamylation are observed in placenta, but not in other tissues. Interacts with S100A11. Heterotetramer, formed by two molecules each of S100A11 and ANXA1. Interacts with DYSF. Interacts with EGFR. Post-translationally, phosphorylated by protein kinase C, EGFR and TRPM7. Phosphorylated in response to EGF treatment. In terms of processing, sumoylated. Proteolytically cleaved by cathepsin CTSG to release the active N-terminal peptide Ac2-26. In terms of tissue distribution, detected in resting neutrophils. Detected in peripheral blood T-cells. Detected in extracellular vesicles in blood serum from patients with inflammatory bowel disease, but not in serum from healthy donors. Detected in placenta (at protein level). Detected in liver.

It localises to the nucleus. It is found in the cytoplasm. The protein resides in the cell projection. The protein localises to the cilium. Its subcellular location is the cell membrane. It localises to the membrane. It is found in the endosome membrane. The protein resides in the basolateral cell membrane. The protein localises to the apical cell membrane. Its subcellular location is the lateral cell membrane. It localises to the secreted. It is found in the extracellular space. The protein resides in the extracellular exosome. The protein localises to the cytoplasmic vesicle. Its subcellular location is the secretory vesicle lumen. It localises to the phagocytic cup. It is found in the early endosome. The protein resides in the cytoplasmic vesicle membrane. Plays important roles in the innate immune response as effector of glucocorticoid-mediated responses and regulator of the inflammatory process. Has anti-inflammatory activity. Plays a role in glucocorticoid-mediated down-regulation of the early phase of the inflammatory response. Contributes to the adaptive immune response by enhancing signaling cascades that are triggered by T-cell activation, regulates differentiation and proliferation of activated T-cells. Promotes the differentiation of T-cells into Th1 cells and negatively regulates differentiation into Th2 cells. Has no effect on unstimulated T cells. Negatively regulates hormone exocytosis via activation of the formyl peptide receptors and reorganization of the actin cytoskeleton. Has high affinity for Ca(2+) and can bind up to eight Ca(2+) ions. Displays Ca(2+)-dependent binding to phospholipid membranes. Plays a role in the formation of phagocytic cups and phagosomes. Plays a role in phagocytosis by mediating the Ca(2+)-dependent interaction between phagosomes and the actin cytoskeleton. In terms of biological role, functions at least in part by activating the formyl peptide receptors and downstream signaling cascades. Promotes chemotaxis of granulocytes and monocytes via activation of the formyl peptide receptors. Promotes rearrangement of the actin cytoskeleton, cell polarization and cell migration. Promotes resolution of inflammation and wound healing. Acts via neutrophil N-formyl peptide receptors to enhance the release of CXCL2. The chain is Annexin A1 (ANXA1) from Homo sapiens (Human).